A 988-amino-acid chain; its full sequence is Transcriptional regulator of yeast form adherence 5 (988 aa).

2 C2H2-type zinc fingers span residues 7-29 and 35-59; these read YICA…ERSH and FHCL…TVHH. Over residues 59–83 the composition is skewed to polar residues; that stretch reads HTNLNPSTLPSNKSLKNPTTNPLDL. 2 disordered regions span residues 59 to 129 and 174 to 229; these read HTNL…SSVG and SMES…SNNN. A compositionally biased stretch (low complexity) spans 84–106; the sequence is SNNEGTTTTTKTGNRKNNSNKNG. Polar residues-rich tracts occupy residues 113–129 and 174–208; these read TNPN…SSVG and SMES…EIVL.

It is found in the nucleus. Its function is as follows. Transcription factor required for yeast cell adherence to silicone substrate. In Candida albicans (strain SC5314 / ATCC MYA-2876) (Yeast), this protein is Transcriptional regulator of yeast form adherence 5 (TRY5).